A 606-amino-acid chain; its full sequence is Probable glutamine--fructose-6-phosphate aminotransferase [isomerizing] (606 aa).

C2 (for GATase activity) is an active-site residue. Residues 2–224 form the Glutamine amidotransferase type-2 domain; the sequence is CGISACLNHT…DNDYGYITNN (223 aa). SIS domains lie at 282 to 427 and 458 to 596; these read FFPE…SLDN and LLEF…PDYP.

It catalyses the reaction D-fructose 6-phosphate + L-glutamine = D-glucosamine 6-phosphate + L-glutamate. It functions in the pathway nucleotide-sugar biosynthesis; UDP-N-acetyl-alpha-D-glucosamine biosynthesis; alpha-D-glucosamine 6-phosphate from D-fructose 6-phosphate: step 1/1. Functionally, controls the flux of glucose into the hexosamine pathway. Most likely involved in regulating the availability of precursors for glycosylation of proteins (Potential). The polypeptide is Probable glutamine--fructose-6-phosphate aminotransferase [isomerizing] (Acanthamoeba polyphaga (Amoeba)).